The chain runs to 480 residues: MATVEDNKKLIADVLSTYPEKAAKKRAKHLGVYEEGEADCGVKSNKQSLPGVMTARGCAYAGSKGVVWGPIKDMVHISHGPVGCGYYSWSGRRNYYIGTTGVDSFGTMQFTSDFQERDIVFGGDKKLAKIIDEIEELFPLNGGVSVQSECPVGLIGDDIESVARTKSKETGKSVVPVRCEGFRGVSQSLGHHIANDMIRDWVFPTADKENAEKGFEGTPYDVAIIGDYNIGGDAWSSRILLEEIGLRVVAQWSGDGTLTEMKATPNVKLNLIHCYRSMNYISRHMEEKYGIPWLEYNFFGPSKIAASLREIASRFDEKIQAKAEEVIEKYRKQSEEIIAKYRPRLEGKTVMMMVGGLRPRHVVPAFKDLGMEIIGTGYEFAHGDDYKRTTGYVEDATLIYDDVTGYEFEEFVKELKPDLVAAGIKEKYVFQKMALPFRQMHSWDYSGPYHGYDGFAIFARDMDLALNSPTWGLIGTPWNK.

The [8Fe-7S] cluster site is built by Cys58, Cys84, and Cys150. [7Fe-Mo-9S-C-homocitryl] cluster contacts are provided by Cys274 and His441.

This sequence belongs to the NifD/NifK/NifE/NifN family. As to quaternary structure, tetramer of two alpha and two beta chains. Forms complex with the iron protein (nitrogenase component 2). [8Fe-7S] cluster is required as a cofactor. Requires [7Fe-Mo-9S-C-homocitryl] cluster as cofactor.

It carries out the reaction N2 + 8 reduced [2Fe-2S]-[ferredoxin] + 16 ATP + 16 H2O = H2 + 8 oxidized [2Fe-2S]-[ferredoxin] + 2 NH4(+) + 16 ADP + 16 phosphate + 6 H(+). This molybdenum-iron protein is part of the nitrogenase complex that catalyzes the key enzymatic reactions in nitrogen fixation. In Crocosphaera subtropica (strain ATCC 51142 / BH68) (Cyanothece sp. (strain ATCC 51142)), this protein is Nitrogenase molybdenum-iron protein alpha chain (nifD).